Reading from the N-terminus, the 238-residue chain is Ubiquinone/menaquinone biosynthesis C-methyltransferase UbiE (238 aa).

S-adenosyl-L-methionine contacts are provided by Thr62 and Asp82.

The protein belongs to the class I-like SAM-binding methyltransferase superfamily. MenG/UbiE family.

The catalysed reaction is a 2-demethylmenaquinol + S-adenosyl-L-methionine = a menaquinol + S-adenosyl-L-homocysteine + H(+). It catalyses the reaction a 2-methoxy-6-(all-trans-polyprenyl)benzene-1,4-diol + S-adenosyl-L-methionine = a 5-methoxy-2-methyl-3-(all-trans-polyprenyl)benzene-1,4-diol + S-adenosyl-L-homocysteine + H(+). It participates in quinol/quinone metabolism; menaquinone biosynthesis; menaquinol from 1,4-dihydroxy-2-naphthoate: step 2/2. Its pathway is cofactor biosynthesis; ubiquinone biosynthesis. In terms of biological role, methyltransferase required for the conversion of demethylmenaquinol (DMKH2) to menaquinol (MKH2) and the conversion of 2-polyprenyl-6-methoxy-1,4-benzoquinol (DDMQH2) to 2-polyprenyl-3-methyl-6-methoxy-1,4-benzoquinol (DMQH2). The protein is Ubiquinone/menaquinone biosynthesis C-methyltransferase UbiE of Wolbachia pipientis wMel.